The chain runs to 735 residues: Disintegrin and metalloproteinase domain-containing protein 2 (735 aa).

A signal peptide spans 1–18 (MWLILLLLSGLSELGGLS). The propeptide occupies 19 to 180 (QSQTEGTREK…YKIRSIKPQR (162 aa)). Topologically, residues 19-686 (QSQTEGTREK…ASAYRSKSPR (668 aa)) are extracellular. N-linked (GlcNAc...) asparagine glycosylation is found at Asn-128, Asn-226, and Asn-279. One can recognise a Peptidase M12B domain in the interval 184–381 (HYLEIHIVVE…QSSHCLQNQP (198 aa)). 4 disulfide bridges follow: Cys-293-Cys-376, Cys-335-Cys-360, Cys-337-Cys-342, and Cys-449-Cys-469. 5 N-linked (GlcNAc...) asparagine glycosylation sites follow: Asn-359, Asn-463, Asn-489, Asn-569, and Asn-585. Residues 389-476 (MAVCGNGEVE…EVCEDFFVQN (88 aa)) form the Disintegrin domain. The region spanning 615-648 (LGYDCNLEKCNHHGVCNNKKNCHCDPTYLPPDCK) is the EGF-like domain. 3 cysteine pairs are disulfide-bonded: Cys-619/Cys-630, Cys-624/Cys-636, and Cys-638/Cys-647. A helical membrane pass occupies residues 687–707 (WPFFLIIPFYVVILVLIGMLV). Residues 708-735 (KVYSQRMKWRMDDFSSEEQFESESESKD) are Cytoplasmic-facing. Ser-729 carries the post-translational modification Phosphoserine.

In terms of assembly, heterodimer with ADAM1/fertilin subunit alpha. Post-translationally, the signal and the metalloprotease domain are cleaved during the epididymal maturation of the spermatozoa. In terms of tissue distribution, expressed in the testis and testicular sperm (at protein level).

It is found in the membrane. Its function is as follows. Sperm surface membrane protein that may be involved in sperm-egg plasma membrane adhesion and fusion during fertilization. Could have a direct role in sperm-zona binding or migration of sperm from the uterus into the oviduct. Interactions with egg membrane could be mediated via binding between its disintegrin-like domain to one or more integrins receptors on the egg. This is a non catalytic metalloprotease-like protein. The sequence is that of Disintegrin and metalloproteinase domain-containing protein 2 from Mus musculus (Mouse).